A 465-amino-acid polypeptide reads, in one-letter code: Cysteine--tRNA ligase (465 aa).

Residue C27 participates in Zn(2+) binding. The 'HIGH' region signature appears at 29–39; that stretch reads PTVYNFFHIGN. Zn(2+)-binding residues include C207, H232, and E236. The 'KMSKS' region motif lies at 264 to 268; sequence KMSKS. K267 is an ATP binding site.

It belongs to the class-I aminoacyl-tRNA synthetase family. Monomer. It depends on Zn(2+) as a cofactor.

It localises to the cytoplasm. The catalysed reaction is tRNA(Cys) + L-cysteine + ATP = L-cysteinyl-tRNA(Cys) + AMP + diphosphate. This chain is Cysteine--tRNA ligase, found in Clostridium botulinum (strain 657 / Type Ba4).